We begin with the raw amino-acid sequence, 245 residues long: 3-dehydroquinate dehydratase (245 aa).

3-dehydroquinate is bound by residues 35–37 and Arg-70; that span reads EFR. His-132 acts as the Proton donor/acceptor in catalysis. Residue Lys-158 is the Schiff-base intermediate with substrate of the active site. Residues Arg-199, Thr-220, and Gln-224 each coordinate 3-dehydroquinate.

This sequence belongs to the type-I 3-dehydroquinase family. Homodimer.

It carries out the reaction 3-dehydroquinate = 3-dehydroshikimate + H2O. It functions in the pathway metabolic intermediate biosynthesis; chorismate biosynthesis; chorismate from D-erythrose 4-phosphate and phosphoenolpyruvate: step 3/7. Functionally, involved in the third step of the chorismate pathway, which leads to the biosynthesis of aromatic amino acids. Catalyzes the cis-dehydration of 3-dehydroquinate (DHQ) and introduces the first double bond of the aromatic ring to yield 3-dehydroshikimate. This Haloquadratum walsbyi (strain DSM 16790 / HBSQ001) protein is 3-dehydroquinate dehydratase.